The sequence spans 525 residues: ATP synthase subunit alpha (525 aa).

Residue 169–176 participates in ATP binding; the sequence is GDRQTGKT.

The protein belongs to the ATPase alpha/beta chains family. F-type ATPases have 2 components, CF(1) - the catalytic core - and CF(0) - the membrane proton channel. CF(1) has five subunits: alpha(3), beta(3), gamma(1), delta(1), epsilon(1). CF(0) has three main subunits: a(1), b(2) and c(9-12). The alpha and beta chains form an alternating ring which encloses part of the gamma chain. CF(1) is attached to CF(0) by a central stalk formed by the gamma and epsilon chains, while a peripheral stalk is formed by the delta and b chains.

It is found in the cell membrane. It carries out the reaction ATP + H2O + 4 H(+)(in) = ADP + phosphate + 5 H(+)(out). Produces ATP from ADP in the presence of a proton gradient across the membrane. The alpha chain is a regulatory subunit. This Mesoplasma florum (strain ATCC 33453 / NBRC 100688 / NCTC 11704 / L1) (Acholeplasma florum) protein is ATP synthase subunit alpha.